The primary structure comprises 151 residues: 3-hydroxyacyl-[acyl-carrier-protein] dehydratase FabZ (151 aa).

H49 is a catalytic residue.

This sequence belongs to the thioester dehydratase family. FabZ subfamily.

It is found in the cytoplasm. It catalyses the reaction a (3R)-hydroxyacyl-[ACP] = a (2E)-enoyl-[ACP] + H2O. Involved in unsaturated fatty acids biosynthesis. Catalyzes the dehydration of short chain beta-hydroxyacyl-ACPs and long chain saturated and unsaturated beta-hydroxyacyl-ACPs. The polypeptide is 3-hydroxyacyl-[acyl-carrier-protein] dehydratase FabZ (Bordetella bronchiseptica (strain ATCC BAA-588 / NCTC 13252 / RB50) (Alcaligenes bronchisepticus)).